Here is a 189-residue protein sequence, read N- to C-terminus: Elongation factor P (189 aa).

An N6-(3,6-diaminohexanoyl)-5-hydroxylysine modification is found at Lys34.

Belongs to the elongation factor P family. May be beta-lysylated on the epsilon-amino group of Lys-34 by the combined action of EpmA and EpmB, and then hydroxylated on the C5 position of the same residue by EpmC (if this protein is present). Lysylation is critical for the stimulatory effect of EF-P on peptide-bond formation. The lysylation moiety may extend toward the peptidyltransferase center and stabilize the terminal 3-CCA end of the tRNA. Hydroxylation of the C5 position on Lys-34 may allow additional potential stabilizing hydrogen-bond interactions with the P-tRNA.

Its subcellular location is the cytoplasm. The protein operates within protein biosynthesis; polypeptide chain elongation. Its function is as follows. Involved in peptide bond synthesis. Alleviates ribosome stalling that occurs when 3 or more consecutive Pro residues or the sequence PPG is present in a protein, possibly by augmenting the peptidyl transferase activity of the ribosome. Modification of Lys-34 is required for alleviation. This Francisella philomiragia subsp. philomiragia (strain ATCC 25017 / CCUG 19701 / FSC 153 / O#319-036) protein is Elongation factor P.